A 101-amino-acid chain; its full sequence is MTSPVAVIARFMPRPDARSALRALLDAMITPTRAEDGCRSYDLYESADGGELVLFERYRSRIALDEHRGSPHYLNYRAQVGELLTRPVAVTVLAPLDEASA.

The region spanning 5–93 (VAVIARFMPR…LTRPVAVTVL (89 aa)) is the ABM domain.

As to quaternary structure, homodimer.

Functionally, putative monooygenase that might be involved in antibiotic biosynthesis, or may act as reactive oxygen species scavenger that could help in evading host defenses. The chain is Putative monooxygenase Rv0793 from Mycobacterium tuberculosis (strain ATCC 25618 / H37Rv).